We begin with the raw amino-acid sequence, 227 residues long: Large ribosomal subunit protein uL3 (227 aa).

The tract at residues 144-166 (RRGPMAHGSKNHRLPGSTGPGTT) is disordered.

It belongs to the universal ribosomal protein uL3 family. Part of the 50S ribosomal subunit. Forms a cluster with proteins L14 and L19.

Functionally, one of the primary rRNA binding proteins, it binds directly near the 3'-end of the 23S rRNA, where it nucleates assembly of the 50S subunit. This is Large ribosomal subunit protein uL3 from Trichodesmium erythraeum (strain IMS101).